A 488-amino-acid polypeptide reads, in one-letter code: Ribulose bisphosphate carboxylase large chain (488 aa).

Residues Asn127 and Thr177 each contribute to the substrate site. The Proton acceptor role is filled by Lys179. Residue Lys181 coordinates substrate. The Mg(2+) site is built by Lys205, Asp207, and Glu208. Position 205 is an N6-carboxylysine (Lys205). The Proton acceptor role is filled by His297. Substrate contacts are provided by Arg298, His330, and Ser382.

The protein belongs to the RuBisCO large chain family. Type I subfamily. In terms of assembly, heterohexadecamer of 8 large chains and 8 small chains. Mg(2+) serves as cofactor.

Its subcellular location is the plastid. The protein resides in the chloroplast. The enzyme catalyses 2 (2R)-3-phosphoglycerate + 2 H(+) = D-ribulose 1,5-bisphosphate + CO2 + H2O. It carries out the reaction D-ribulose 1,5-bisphosphate + O2 = 2-phosphoglycolate + (2R)-3-phosphoglycerate + 2 H(+). In terms of biological role, ruBisCO catalyzes two reactions: the carboxylation of D-ribulose 1,5-bisphosphate, the primary event in carbon dioxide fixation, as well as the oxidative fragmentation of the pentose substrate in the photorespiration process. Both reactions occur simultaneously and in competition at the same active site. The sequence is that of Ribulose bisphosphate carboxylase large chain from Ectocarpus siliculosus (Brown alga).